Here is a 958-residue protein sequence, read N- to C-terminus: Glycine dehydrogenase (decarboxylating) (958 aa).

Lysine 708 is modified (N6-(pyridoxal phosphate)lysine).

The protein belongs to the GcvP family. The glycine cleavage system is composed of four proteins: P, T, L and H. It depends on pyridoxal 5'-phosphate as a cofactor.

The catalysed reaction is N(6)-[(R)-lipoyl]-L-lysyl-[glycine-cleavage complex H protein] + glycine + H(+) = N(6)-[(R)-S(8)-aminomethyldihydrolipoyl]-L-lysyl-[glycine-cleavage complex H protein] + CO2. The glycine cleavage system catalyzes the degradation of glycine. The P protein binds the alpha-amino group of glycine through its pyridoxal phosphate cofactor; CO(2) is released and the remaining methylamine moiety is then transferred to the lipoamide cofactor of the H protein. The protein is Glycine dehydrogenase (decarboxylating) of Photorhabdus laumondii subsp. laumondii (strain DSM 15139 / CIP 105565 / TT01) (Photorhabdus luminescens subsp. laumondii).